We begin with the raw amino-acid sequence, 107 residues long: Thioredoxin (107 aa).

Residues 2-107 (SATPQVSDAS…TLASTLEKYL (106 aa)) form the Thioredoxin domain. Cys-32 and Cys-35 are oxidised to a cystine.

This sequence belongs to the thioredoxin family.

Its function is as follows. Component of the thioredoxin-thioredoxin reductase system. Participates in various redox reactions through the reversible oxidation of its active center dithiol to a disulfide and catalyzes dithiol-disulfide exchange reactions. In Synechocystis sp. (strain ATCC 27184 / PCC 6803 / Kazusa), this protein is Thioredoxin (trxA).